The primary structure comprises 1097 residues: Transmembrane protein 132D (1097 aa).

The N-terminal stretch at 1-30 (MCPSEMGTLWYLWSPVLISLAALFSKVTEG) is a signal peptide. Residues 31 to 913 (RGILESIQRF…PDQAAKGLSD (883 aa)) are Extracellular-facing. The span at 233–245 (DERGDCAKEDSRK) shows a compositional bias: basic and acidic residues. Disordered stretches follow at residues 233–263 (DERGDCAKEDSRKSGGAPAGHNDVDESSPPL) and 885–906 (SFPDQVDLPGSNVGTEEHDPDQ). A helical membrane pass occupies residues 914 to 934 (LEIGMYALLGVFCLAILVFLI). Topologically, residues 935–1097 (NCVTFALKYR…SCMERLHEHV (163 aa)) are cytoplasmic. Residues 1021 to 1042 (MLTDDKEQKSEPPTSPTSKRKR) form a disordered region.

The protein belongs to the TMEM132 family. Expressed in mature oligodendrocytes in the brain.

It is found in the membrane. Functionally, regulates neuronal morphology via inhibition of the WAVE regulatory complex (WCR), a complex that controls F-actin cytoskeletal dynamics. The sequence is that of Transmembrane protein 132D (Tmem132d) from Rattus norvegicus (Rat).